The following is a 402-amino-acid chain: Acetate kinase (402 aa).

Asn-7 contacts Mg(2+). Lys-14 provides a ligand contact to ATP. Arg-95 contributes to the substrate binding site. Asp-152 serves as the catalytic Proton donor/acceptor. Residues 212–216, 286–288, and 334–338 contribute to the ATP site; these read HLGNG, DMR, and GIGEN. A Mg(2+)-binding site is contributed by Glu-388.

Belongs to the acetokinase family. In terms of assembly, homodimer. Mg(2+) is required as a cofactor. Requires Mn(2+) as cofactor.

It is found in the cytoplasm. It catalyses the reaction acetate + ATP = acetyl phosphate + ADP. It functions in the pathway metabolic intermediate biosynthesis; acetyl-CoA biosynthesis; acetyl-CoA from acetate: step 1/2. Its function is as follows. Catalyzes the formation of acetyl phosphate from acetate and ATP. Can also catalyze the reverse reaction. The sequence is that of Acetate kinase from Nitratidesulfovibrio vulgaris (strain DP4) (Desulfovibrio vulgaris).